A 1053-amino-acid chain; its full sequence is DNA-directed RNA polymerase subunit beta' (1053 aa).

The Zn(2+) site is built by C60, C62, C75, and C78. D449, D451, and D453 together coordinate Mg(2+). Positions 818, 892, 899, and 902 each coordinate Zn(2+).

The protein belongs to the RNA polymerase beta' chain family. As to quaternary structure, the RNAP catalytic core consists of 2 alpha, 1 beta, 1 beta' and 1 omega subunit. When a sigma factor is associated with the core the holoenzyme is formed, which can initiate transcription. Requires Mg(2+) as cofactor. It depends on Zn(2+) as a cofactor.

It carries out the reaction RNA(n) + a ribonucleoside 5'-triphosphate = RNA(n+1) + diphosphate. DNA-dependent RNA polymerase catalyzes the transcription of DNA into RNA using the four ribonucleoside triphosphates as substrates. The sequence is that of DNA-directed RNA polymerase subunit beta' from Listeria grayi (Listeria murrayi).